A 437-amino-acid polypeptide reads, in one-letter code: GTPase Der (437 aa).

EngA-type G domains lie at 3–168 and 178–353; these read PLIA…PESE and VKLA…RNRS. GTP-binding positions include 9-16, 56-60, 120-123, 184-191, 231-235, and 296-299; these read GRPNVGKS, DTGGY, NKVE, DTAGL, and NKWD. In terms of domain architecture, KH-like spans 354 to 437; that stretch reads RKISTSSLNR…VPISLRFMEK (84 aa).

This sequence belongs to the TRAFAC class TrmE-Era-EngA-EngB-Septin-like GTPase superfamily. EngA (Der) GTPase family. In terms of assembly, associates with the 50S ribosomal subunit.

Functionally, GTPase that plays an essential role in the late steps of ribosome biogenesis. This is GTPase Der from Chlorobium limicola (strain DSM 245 / NBRC 103803 / 6330).